The primary structure comprises 343 residues: Phosphate acyltransferase (343 aa).

The protein belongs to the PlsX family. Homodimer. Probably interacts with PlsY.

Its subcellular location is the cytoplasm. It carries out the reaction a fatty acyl-[ACP] + phosphate = an acyl phosphate + holo-[ACP]. It participates in lipid metabolism; phospholipid metabolism. In terms of biological role, catalyzes the reversible formation of acyl-phosphate (acyl-PO(4)) from acyl-[acyl-carrier-protein] (acyl-ACP). This enzyme utilizes acyl-ACP as fatty acyl donor, but not acyl-CoA. The sequence is that of Phosphate acyltransferase from Coxiella burnetii (strain CbuG_Q212) (Coxiella burnetii (strain Q212)).